The primary structure comprises 64 residues: Prokaryotic ubiquitin-like protein Pup (64 aa).

Positions 1-37 (MAQEQTKRGGGGGEDDDLSGGAGAGQERREKLAEETD) are disordered. The interval 21–58 (GAGAGQERREKLAEETDDLLDEIDDVLEENAEDFVRAY) is ARC ATPase binding. The stretch at 24 to 52 (AGQERREKLAEETDDLLDEIDDVLEENAE) forms a coiled coil. Position 64 is a deamidated glutamine (Gln-64). Gln-64 is covalently cross-linked (Isoglutamyl lysine isopeptide (Gln-Lys) (interchain with K-? in acceptor proteins)).

The protein belongs to the prokaryotic ubiquitin-like protein family. Strongly interacts with the proteasome-associated ATPase ARC through a hydrophobic interface; the interacting region of Pup lies in its C-terminal half. There is one Pup binding site per ARC hexamer ring. Post-translationally, is modified by deamidation of its C-terminal glutamine to glutamate by the deamidase Dop, a prerequisite to the subsequent pupylation process.

The protein operates within protein degradation; proteasomal Pup-dependent pathway. Protein modifier that is covalently attached to lysine residues of substrate proteins, thereby targeting them for proteasomal degradation. The tagging system is termed pupylation. The chain is Prokaryotic ubiquitin-like protein Pup from Mycobacterium sp. (strain JLS).